A 435-amino-acid chain; its full sequence is Mitogen-activated protein kinase HOG1 (435 aa).

Residue T2 is modified to N-acetylthreonine. The region spanning 23 to 302 (YNDLNPVGMG…AADALAHPYS (280 aa)) is the Protein kinase domain. ATP-binding positions include 29-37 (VGMGAFGLV) and K52. The Proton acceptor role is filled by D144. Arsenite is bound by residues C156 and C161. T174 is subject to Phosphothreonine; by PBS2. The TXY motif lies at 174–176 (TGY). Phosphotyrosine; by PBS2 is present on Y176. An arsenite-binding site is contributed by C205.

The protein belongs to the protein kinase superfamily. Ser/Thr protein kinase family. MAP kinase subfamily. HOG1 sub-subfamily. Interacts with CDC37, HOT1, KIN28, PTP2, PTP3, RBP1, RCK2, RPD3, SIC1, SMP1 and SIN4. The cofactor is Mg(2+). Post-translationally, activated by PBS2-mediated concomitant phosphorylation at Thr-174 and Tyr-176. Dually phosphorylated on Thr-174 and Tyr-176, which activates the enzyme.

It localises to the cytoplasm. Its subcellular location is the nucleus. It catalyses the reaction L-seryl-[protein] + ATP = O-phospho-L-seryl-[protein] + ADP + H(+). It carries out the reaction L-threonyl-[protein] + ATP = O-phospho-L-threonyl-[protein] + ADP + H(+). Activated by tyrosine and threonine phosphorylation. Inactivated by dephosphorylation via recruitment of PTC1 to the PBS2-HOG1 complex after adaptation to osmotic stress. PTP2 and PTP3 inactivate HOG1 by dephosphorylating Tyr-176, while the PP2Cs PTC1 and PTC2 or PTC3 dephosphorylate Thr-174 in the activation loop. In terms of biological role, proline-directed serine/threonine-protein kinase involved in a signal transduction pathway that is activated by changes in the osmolarity of the extracellular environment. Controls osmotic regulation of transcription via the stress response element (STRE) in promoters of target genes. Upon osmotic shock, associates with the SKO1-SSN6-TUP1 complex, phosphorylates SKO1, and converts it into an activator that subsequently recruits Swi/Snf and SAGA complexes. Activates the SMP1 transcription factor and the RCK2 kinase, both also involved in the regulation of the expression of a subset of osmotic stress-related genes. Phosphorylation of HSL1 by HOG1 leads to a G2 arrest essential for cell survival at high osmolarity. Also mediates cell-cycle arrest in G1 phase by the dual targeting of SIC1. Phosphorylates methyltransferase DOT1 at least on 'Ser-565' and 'Thr-576'. Regulates MFA2 ARE-mediated translation in response to carbon source. Targets RPD3 histone deacetylase to osmoresponsive promoters to induce gene expression on stress. Required for the Golgi apparatus localization of MNN1. Plays an essential role in maintaining water homeostasis, arsenite detoxification, copper-resistance, cold-resistance, hydrogen peroxide response, adaptation to citric acid stress, and repression of the mating pathway activity. Functions as an arsenic sensor and effector via direct binding to arsenic and subsequent phosphorylation of the ARR1 transcription factor. The polypeptide is Mitogen-activated protein kinase HOG1 (HOG1) (Saccharomyces cerevisiae (strain ATCC 204508 / S288c) (Baker's yeast)).